Consider the following 330-residue polypeptide: Olfactory receptor 5T9 (330 aa).

Over 1 to 37 (MSIHSPGYTVRRIPVNNVTDTTMFILTGFTDDADLQV) the chain is Extracellular. A glycan (N-linked (GlcNAc...) asparagine) is linked at Asn17. Residues 38 to 58 (LLFLLFFVIYLFTLIGNLGLV) traverse the membrane as a helical segment. Residues 59 to 66 (LLVIGDSR) are Cytoplasmic-facing. Residues 67–87 (LHNPMYYFLSVLSFLDACYST) form a helical membrane-spanning segment. Residues 88-111 (VVTPKMLVNFISNDKSISYPGCVT) are Extracellular-facing. A disulfide bond links Cys109 and Cys201. A helical transmembrane segment spans residues 112-132 (EMFLFVTFGTTECFLLAAMAY). The Cytoplasmic portion of the chain corresponds to 133-145 (DRFVAIYNPLLYA). A helical membrane pass occupies residues 146–166 (VKMSPRVYIPLIIACYSGGIM). At 167-208 (HATIHTVATFSLSFCASNEIRHVFCDIPPLLAISCSNTNINQ) the chain is on the extracellular side. A helical transmembrane segment spans residues 209–229 (LLLFYCVGSIEIITILIVLVS). Topologically, residues 230–249 (YSFILFAILKMNSAEGRRKI) are cytoplasmic. The chain crosses the membrane as a helical span at residues 250-270 (FSTCGSHLTGVSIYHGTILFM). Residues 271–283 (YVRPSSNYALEHD) are Extracellular-facing. A helical transmembrane segment spans residues 284 to 304 (MIVSTFYTIVIPMLNPIIYSL). Residues 305 to 330 (RNKDVKEAMKKIFERNFFMNKVHFKL) lie on the Cytoplasmic side of the membrane.

Belongs to the G-protein coupled receptor 1 family.

It is found in the cell membrane. Potential odorant receptor. The sequence is that of Olfactory receptor 5T9 from Mus musculus (Mouse).